The primary structure comprises 786 residues: DNA ligase (786 aa).

NAD(+) contacts are provided by residues 32-36, 81-82, and Glu-121; these read DAEYD and SL. Lys-123 acts as the N6-AMP-lysine intermediate in catalysis. The NAD(+) site is built by Arg-144, Glu-181, Lys-297, and Lys-321. Residues Cys-415, Cys-418, Cys-445, and Cys-451 each coordinate Zn(2+). Residues 703 to 786 enclose the BRCT domain; that stretch reads AEGLPLAGQT…EQLKSYGIEA (84 aa).

Belongs to the NAD-dependent DNA ligase family. LigA subfamily. Mg(2+) is required as a cofactor. The cofactor is Mn(2+).

It catalyses the reaction NAD(+) + (deoxyribonucleotide)n-3'-hydroxyl + 5'-phospho-(deoxyribonucleotide)m = (deoxyribonucleotide)n+m + AMP + beta-nicotinamide D-nucleotide.. In terms of biological role, DNA ligase that catalyzes the formation of phosphodiester linkages between 5'-phosphoryl and 3'-hydroxyl groups in double-stranded DNA using NAD as a coenzyme and as the energy source for the reaction. It is essential for DNA replication and repair of damaged DNA. This Ectopseudomonas mendocina (strain ymp) (Pseudomonas mendocina) protein is DNA ligase.